The following is a 473-amino-acid chain: Maltose fermentation regulatory protein MAL63 (473 aa).

A DNA-binding region (zn(2)-C6 fungal-type) is located at residues 8–34 (CDCCRVRRVKCDRNKPCNRCIQRNLNC). Residues 41–49 (KKRGPKSIR) carry the Nuclear localization signal motif.

Belongs to the MAL13 family.

Its subcellular location is the nucleus. In terms of biological role, regulates the coordinate transcription of structural MAL6S (maltase) and MAL6T (maltose permease) genes. The chain is Maltose fermentation regulatory protein MAL63 (MAL63) from Saccharomyces cerevisiae (Baker's yeast).